We begin with the raw amino-acid sequence, 97 residues long: Aspartyl/glutamyl-tRNA(Asn/Gln) amidotransferase subunit C (97 aa).

This sequence belongs to the GatC family. Heterotrimer of A, B and C subunits.

The catalysed reaction is L-glutamyl-tRNA(Gln) + L-glutamine + ATP + H2O = L-glutaminyl-tRNA(Gln) + L-glutamate + ADP + phosphate + H(+). The enzyme catalyses L-aspartyl-tRNA(Asn) + L-glutamine + ATP + H2O = L-asparaginyl-tRNA(Asn) + L-glutamate + ADP + phosphate + 2 H(+). In terms of biological role, allows the formation of correctly charged Asn-tRNA(Asn) or Gln-tRNA(Gln) through the transamidation of misacylated Asp-tRNA(Asn) or Glu-tRNA(Gln) in organisms which lack either or both of asparaginyl-tRNA or glutaminyl-tRNA synthetases. The reaction takes place in the presence of glutamine and ATP through an activated phospho-Asp-tRNA(Asn) or phospho-Glu-tRNA(Gln). This Thermosynechococcus vestitus (strain NIES-2133 / IAM M-273 / BP-1) protein is Aspartyl/glutamyl-tRNA(Asn/Gln) amidotransferase subunit C.